The sequence spans 882 residues: MTTSELPEHLAKHEVRYADHRQVERDRLTPMMQHYAEVKDQHLQQILLYRMGDFFECFFQDAIVVARELELVLTSKEAGKEVGRVPMAGIPYHALDRYASQLVEKGYAIAICDQVETAAQAQGPLVRREITRIITPGTILEEGMLQARRNNFLAAVVIAGEHWGLAYADSSTGDYWTSQSTGLEGLTQELYRLQPSEVLFPSAAPDLAGLLRPGQSKPQQIPDCLPDSFCYALRSPMPFELHEARQRLLEHFQLRSLEGCGCEQLPLAIRAAGGLLDYLGETQRESLAPLQKPRTYSLSEFLILDQQTRRNLEITQTQRDGSFHGSLLWALDRTMTSMGGRLLRRWLLQPLLNPEAIRNRQAAIQELCQDGRLRQDLRSLLQKIYDLERLSGRAGAGTANARDLLALAESLLRLPELAQLLSRAQSPLLAQLQQVPPELEQLGDRLQQHLVESPPLQLTEGGLIRSGVAIALDELRQQVESDRQWIASLEASERTATGINSLKVGYSKTFGYFISLSRSKADQVPDHYIRRQTLTNEERFITPDLKERESRILNAQTDLNQLEYDLFVGLRSEVSHHVETIRAIATAVAAADVLAALAEVAVYQNYCCPEIRDDRQLAIQDGRHPVVEQALPSGFYVPNSCGLGSDRGPDLIVLTGPNASGKSCYLRQVGLIQLLAQIGSFVPAKNAQVGICDRIFTRVGAVDDLATGQSTFMVEMNETANILNHATARSLVLLDEIGRGTATFDGLSIAWAVAEYLAREIQARTIFATHYHELNELSGLLKNVANFQVTVKELPDRIVFLHQVQPGGADRSYGIEAARLAGLPSEVIDRAREVMSRIEKHSRIAVGLRRGNGSQRRTQASPQQIDATIATEQLGLFSGPSH.

656–663 (GPNASGKS) contributes to the ATP binding site.

This sequence belongs to the DNA mismatch repair MutS family.

In terms of biological role, this protein is involved in the repair of mismatches in DNA. It is possible that it carries out the mismatch recognition step. This protein has a weak ATPase activity. This chain is DNA mismatch repair protein MutS, found in Synechococcus elongatus (strain ATCC 33912 / PCC 7942 / FACHB-805) (Anacystis nidulans R2).